The primary structure comprises 142 residues: Hemoglobin subunit pi (142 aa).

One can recognise a Globin domain in the interval 2 to 142 (ALTQAEKAAV…ISSVLTEKYR (141 aa)). Heme b-binding residues include His59 and His88.

It belongs to the globin family.

Its function is as follows. The pi' chain is the counterpart of the alpha chain in the major early embryonic hemoglobin P. The sequence is that of Hemoglobin subunit pi from Gallus gallus (Chicken).